We begin with the raw amino-acid sequence, 137 residues long: Methylglyoxal synthase (137 aa).

Positions 1–137 constitute an MGS-like domain; the sequence is MKIALIAHDK…DLLRGEEPNV (137 aa). Residues histidine 8, lysine 12, 34 to 37, and 54 to 55 each bind substrate; these read TGTT and SG. Aspartate 60 serves as the catalytic Proton donor/acceptor. Histidine 87 lines the substrate pocket.

The protein belongs to the methylglyoxal synthase family.

The catalysed reaction is dihydroxyacetone phosphate = methylglyoxal + phosphate. In terms of biological role, catalyzes the formation of methylglyoxal from dihydroxyacetone phosphate. The sequence is that of Methylglyoxal synthase from Bacillus subtilis (strain 168).